The following is a 134-amino-acid chain: Small ribosomal subunit protein uS11 (134 aa).

Positions T115 to K134 are disordered. The segment covering P124–K134 has biased composition (basic residues).

This sequence belongs to the universal ribosomal protein uS11 family. As to quaternary structure, part of the 30S ribosomal subunit. Interacts with proteins S7 and S18. Binds to IF-3.

Its function is as follows. Located on the platform of the 30S subunit, it bridges several disparate RNA helices of the 16S rRNA. Forms part of the Shine-Dalgarno cleft in the 70S ribosome. The sequence is that of Small ribosomal subunit protein uS11 from Mycoplasma mobile (strain ATCC 43663 / 163K / NCTC 11711) (Mesomycoplasma mobile).